Consider the following 106-residue polypeptide: Large ribosomal subunit protein eL30 (106 aa).

This sequence belongs to the eukaryotic ribosomal protein eL30 family.

The chain is Large ribosomal subunit protein eL30 from Methanococcus maripaludis (strain C7 / ATCC BAA-1331).